The sequence spans 375 residues: uncharacterized protein (375 aa).

Residues 1–12 show a composition bias toward basic residues; it reads MAGNKKQVKKNT. 2 disordered regions span residues 1-76 and 119-274; these read MAGN…EKKS and KNKN…KEIK. Residues 26 to 39 are compositionally biased toward polar residues; sequence DTSNLDTAVQTSAS. Low complexity predominate over residues 129–141; sequence TATDGTTTTTNIP. A compositionally biased stretch (basic and acidic residues) spans 175–185; the sequence is DETHSHKEEPK. 2 stretches are compositionally biased toward low complexity: residues 198-212 and 225-241; these read SKQQ…SSSS and PTPT…KSTP. Basic and acidic residues predominate over residues 256–274; the sequence is EQPKEKSSPAPVKKEKEIK. Transmembrane regions (helical) follow at residues 299-319 and 327-347; these read VVYK…LVPL and IYSY…TLFI. The segment at 355-375 is disordered; it reads ASKEQKSKSGNKKSTTRKVKA. Over residues 363 to 375 the composition is skewed to basic residues; sequence SGNKKSTTRKVKA.

Its subcellular location is the membrane. This is an uncharacterized protein from Dictyostelium discoideum (Social amoeba).